The primary structure comprises 228 residues: L-ribulose-5-phosphate 4-epimerase UlaF (228 aa).

Substrate-binding positions include 26-27 (GN), 43-44 (SG), and 72-73 (SS). Zn(2+) contacts are provided by aspartate 74, histidine 93, and histidine 95. Aspartate 118 functions as the Proton donor/acceptor in the catalytic mechanism. Histidine 167 serves as a coordination point for Zn(2+). The Proton donor/acceptor role is filled by tyrosine 225.

The protein belongs to the aldolase class II family. AraD/FucA subfamily. Requires Zn(2+) as cofactor.

It carries out the reaction L-ribulose 5-phosphate = D-xylulose 5-phosphate. It participates in cofactor degradation; L-ascorbate degradation; D-xylulose 5-phosphate from L-ascorbate: step 4/4. Catalyzes the isomerization of L-ribulose 5-phosphate to D-xylulose 5-phosphate. Is involved in the anaerobic L-ascorbate utilization. This Escherichia coli (strain SE11) protein is L-ribulose-5-phosphate 4-epimerase UlaF.